The following is a 163-amino-acid chain: Cyclic pyranopterin monophosphate synthase (163 aa).

Residues 78–80 (LCH) and 116–117 (ME) contribute to the substrate site. Residue D131 is part of the active site.

The protein belongs to the MoaC family. Homohexamer; trimer of dimers.

It carries out the reaction (8S)-3',8-cyclo-7,8-dihydroguanosine 5'-triphosphate = cyclic pyranopterin phosphate + diphosphate. Its pathway is cofactor biosynthesis; molybdopterin biosynthesis. Its function is as follows. Catalyzes the conversion of (8S)-3',8-cyclo-7,8-dihydroguanosine 5'-triphosphate to cyclic pyranopterin monophosphate (cPMP). This Agrobacterium fabrum (strain C58 / ATCC 33970) (Agrobacterium tumefaciens (strain C58)) protein is Cyclic pyranopterin monophosphate synthase.